The following is a 196-amino-acid chain: Ribonuclease HII (196 aa).

One can recognise an RNase H type-2 domain in the interval tyrosine 15 to isoleucine 196. Aspartate 21, glutamate 22, and aspartate 112 together coordinate a divalent metal cation.

This sequence belongs to the RNase HII family. Requires Mn(2+) as cofactor. Mg(2+) serves as cofactor.

The protein localises to the cytoplasm. It carries out the reaction Endonucleolytic cleavage to 5'-phosphomonoester.. Its function is as follows. Endonuclease that specifically degrades the RNA of RNA-DNA hybrids. The chain is Ribonuclease HII from Rickettsia canadensis (strain McKiel).